Here is a 254-residue protein sequence, read N- to C-terminus: Inner membrane protein YabI (254 aa).

Residues 1–7 lie on the Periplasmic side of the membrane; that stretch reads MQALLEH. 2 consecutive transmembrane segments (helical) span residues 8-28 and 29-49; these read FITQSTVYSLMAVVLVAFLES and LALVGLILPGTVLMAGLGALI. The Periplasmic portion of the chain corresponds to 50-58; it reads GSGELSFWH. Residues 59–79 form a helical membrane-spanning segment; that stretch reads AWLAGIIGCLMGDWISFWLGW. At 80-144 the chain is on the cytoplasmic side; the sequence is RFKKPLHRWS…LPVAKFITPN (65 aa). A helical membrane pass occupies residues 145 to 165; it reads IIGCLLWPPFYFLPGILAGAA. Residues 166–178 are Periplasmic-facing; it reads IDIPAGMQSGEFK. A helical membrane pass occupies residues 179 to 199; the sequence is WLLLATAVFLWVGGWLCWRLW. Residues 200 to 215 are Cytoplasmic-facing; the sequence is RSGKATDRLSHYLSRG. A helical membrane pass occupies residues 216–236; sequence RLLWLTPLISAIGVVALVVLI. Residues 237–254 lie on the Periplasmic side of the membrane; that stretch reads RHPLMPVYIDILRKVVGV.

It belongs to the DedA family.

The protein resides in the cell inner membrane. In Escherichia coli (strain K12), this protein is Inner membrane protein YabI (yabI).